We begin with the raw amino-acid sequence, 232 residues long: Large ribosomal subunit protein uL1 (232 aa).

The protein belongs to the universal ribosomal protein uL1 family. In terms of assembly, part of the 50S ribosomal subunit.

Binds directly to 23S rRNA. The L1 stalk is quite mobile in the ribosome, and is involved in E site tRNA release. In terms of biological role, protein L1 is also a translational repressor protein, it controls the translation of the L11 operon by binding to its mRNA. This Chlamydia pneumoniae (Chlamydophila pneumoniae) protein is Large ribosomal subunit protein uL1.